Reading from the N-terminus, the 137-residue chain is MRAVGVFLAICLVTIFVLPTWGNWAYPCCHVTQLRAQHLLALENISDIYLVSNQTCDGFSLASLNSPKNGSNQLVISRCANGLNVVSFFISILKRSSSALTGHLRELLTTLETLYGSFSVEDLFGANLNRYAWHRGG.

The signal sequence occupies residues 1–22 (MRAVGVFLAICLVTIFVLPTWG). The segment at 23-128 (NWAYPCCHVT…SVEDLFGANL (106 aa)) is interaction with gH. 2 disulfides stabilise this stretch: Cys-28–Cys-56 and Cys-29–Cys-79.

This sequence belongs to the herpesviridae glycoprotein L family. Interacts with glycoprotein H (gH); this interaction is necessary for the correct processing and cell surface expression of gH. The heterodimer gH/gL seems to interact with gB trimers during fusion. The heterodimer gH/gL interacts with host EPHA2 to facilitate virus internalization and fusion.

The protein localises to the virion membrane. Its subcellular location is the host cell membrane. It is found in the host Golgi apparatus. The protein resides in the host trans-Golgi network. The heterodimer glycoprotein H-glycoprotein L is required for the fusion of viral and plasma membranes leading to virus entry into the host cell. Acts as a functional inhibitor of gH and maintains gH in an inhibited form. Upon binding to host integrins, gL dissociates from gH leading to activation of the viral fusion glycoproteins gB and gH. Fusion of EBV with B-lymphocytes requires the additional receptor-binding protein gp42, which forms a complex with gH/gL. The heterodimer gH/gL targets also host EPHA2 to promote viral entry. The polypeptide is Envelope glycoprotein L (Homo sapiens (Human)).